The following is a 167-amino-acid chain: NAD(P)H-quinone oxidoreductase subunit I, chloroplastic (167 aa).

2 4Fe-4S ferredoxin-type domains span residues 55-84 and 95-124; these read GRIH…VDWK and LNYS…MTEE. Positions 64, 67, 70, 74, 104, 107, 110, and 114 each coordinate [4Fe-4S] cluster.

The protein belongs to the complex I 23 kDa subunit family. In terms of assembly, NDH is composed of at least 16 different subunits, 5 of which are encoded in the nucleus. Requires [4Fe-4S] cluster as cofactor.

The protein resides in the plastid. It is found in the chloroplast thylakoid membrane. It carries out the reaction a plastoquinone + NADH + (n+1) H(+)(in) = a plastoquinol + NAD(+) + n H(+)(out). The catalysed reaction is a plastoquinone + NADPH + (n+1) H(+)(in) = a plastoquinol + NADP(+) + n H(+)(out). Its function is as follows. NDH shuttles electrons from NAD(P)H:plastoquinone, via FMN and iron-sulfur (Fe-S) centers, to quinones in the photosynthetic chain and possibly in a chloroplast respiratory chain. The immediate electron acceptor for the enzyme in this species is believed to be plastoquinone. Couples the redox reaction to proton translocation, and thus conserves the redox energy in a proton gradient. This is NAD(P)H-quinone oxidoreductase subunit I, chloroplastic from Arabis hirsuta (Hairy rock-cress).